The following is a 231-amino-acid chain: Chromosome partition protein MukE (231 aa).

The tract at residues 195-231 (MIRDGEAMPVEGSLSLKDDSDDNDRTDDTAPETGEDE) is disordered. A compositionally biased stretch (acidic residues) spans 213-231 (DSDDNDRTDDTAPETGEDE).

The protein belongs to the MukE family. In terms of assembly, interacts, and probably forms a ternary complex, with MukF and MukB. The complex formation is stimulated by calcium or magnesium.

The protein localises to the cytoplasm. The protein resides in the nucleoid. Its function is as follows. Involved in chromosome condensation, segregation and cell cycle progression. May participate in facilitating chromosome segregation by condensation DNA from both sides of a centrally located replisome during cell division. Probably acts via its interaction with MukB and MukF. This chain is Chromosome partition protein MukE, found in Pectobacterium atrosepticum (strain SCRI 1043 / ATCC BAA-672) (Erwinia carotovora subsp. atroseptica).